Here is a 93-residue protein sequence, read N- to C-terminus: UPF0358 protein lmo1070 (93 aa).

It belongs to the UPF0358 family.

The polypeptide is UPF0358 protein lmo1070 (Listeria monocytogenes serovar 1/2a (strain ATCC BAA-679 / EGD-e)).